The primary structure comprises 51 residues: rpoE leader peptide (51 aa).

In terms of biological role, a short protein whose stop codon overlaps with the start codon of downstream rpoE; a premature stop codon at position 12 results in decreased expression of ECF sigma factor RpoE, thus they are translationally coupled. This is rpoE leader peptide from Escherichia coli (strain K12).